Here is a 1897-residue protein sequence, read N- to C-terminus: Spectinabilin polyketide synthase system protein NorA (1897 aa).

Residues 112–536 (EEPIAIVGMG…GTNAHIILEQ (425 aa)) enclose the Ketosynthase family 3 (KS3) domain. Catalysis depends on for beta-ketoacyl synthase activity residues Cys-283, His-418, and His-458. The tract at residues 538–563 (APEPERPHAPEADGEPRPLPWPVSGH) is disordered. Over residues 540–553 (EPERPHAPEADGEP) the composition is skewed to basic and acidic residues. Positions 644–962 (FVFPGQGSQW…VAEAHVHGVA (319 aa)) constitute a Malonyl-CoA:ACP transacylase (MAT) domain. The segment at 1012-1139 (HPLLGAAIPL…GTLAPGGGHP (128 aa)) is N-terminal hotdog fold. One can recognise a PKS/mFAS DH domain in the interval 1012–1289 (HPLLGAAIPL…MRPVTAEALH (278 aa)). His-1045 functions as the Proton acceptor; for dehydratase activity in the catalytic mechanism. The interval 1113-1152 (SRPEDAGADEPWTRHAEGTLAPGGGHPRQDPGPWPPTGAR) is disordered. A C-terminal hotdog fold region spans residues 1151 to 1289 (AREIDLDDCY…MRPVTAEALH (139 aa)). Asp-1211 acts as the Proton donor; for dehydratase activity in catalysis. In terms of domain architecture, Ketoreductase (KR) spans 1494–1671 (GTVLVTGGLG…GVSMGWGMWA (178 aa)). The 76-residue stretch at 1777–1852 (ALLLGVVRGH…ALSRYLRTLL (76 aa)) folds into the Carrier domain. The residue at position 1812 (Ser-1812) is an O-(pantetheine 4'-phosphoryl)serine. A disordered region spans residues 1854–1873 (PDPAPAPTAPDGQPGPDQAD). Low complexity predominate over residues 1862–1871 (APDGQPGPDQ).

As to quaternary structure, the spectinabilin polyketide synthase complex is composed of 4 proteins, NorA, NorA', NorB and NorC. The complex comprises 6 modules with a total of 28 catalytic domains catalyzing 7 chain elongations. NorA comprises one module, NorA' two modules, NorB one module and NorC two modules. Pantetheine 4'-phosphate is required as a cofactor.

The catalysed reaction is 4-nitrobenzoyl-CoA + 6 (S)-methylmalonyl-CoA + malonyl-CoA + 6 NADPH + 12 H(+) = demethyldeoxyspectinabilin + 7 CO2 + 6 NADP(+) + 8 CoA + 5 H2O. It participates in antibiotic biosynthesis. The protein operates within polyketide biosynthesis. In terms of biological role, component of a type I modular polyketide synthase (PKS) that generates the backbone of the antibiotic spectinabilin (also known as neoaureothin), a nitroaryl-substituted polyketide metabolite. This PKS system accepts the unusual starter unit 4-nitrobenzoyl-CoA and extends it by 6 molecules of (S)-methylmalonyl-CoA and a single molecule of malonyl-CoA. The first module, NorA, is used twice in an iterative fashion. The sequence is that of Spectinabilin polyketide synthase system protein NorA from Streptomyces orinoci (Streptoverticillium orinoci).